The chain runs to 958 residues: DNA repair and recombination protein RDH54 (958 aa).

The segment at 189 to 217 is disordered; that stretch reads EALSQNMGNPSPPTTSTTETVPSTKNDGG. The span at 202 to 212 shows a compositional bias: low complexity; sequence TTSTTETVPST. In terms of domain architecture, Helicase ATP-binding spans 333–521; that stretch reads LENDSDISGC…FTIIDFINPG (189 aa). 380-387 serves as a coordination point for ATP; sequence IPLTGLCK. Positions 506–509 match the DEGH box motif; the sequence is NDLN. Lys-649 is covalently cross-linked (Glycyl lysine isopeptide (Lys-Gly) (interchain with G-Cter in ubiquitin)). The region spanning 665 to 824 is the Helicase C-terminal domain; sequence KLKVLMTLLE…DSEMRNKESS (160 aa).

The protein belongs to the SNF2/RAD54 helicase family. As to quaternary structure, interacts with RAD51 and DMC1.

It localises to the nucleus. The catalysed reaction is ATP + H2O = ADP + phosphate + H(+). Its function is as follows. Involved in the recombinational repair of double-strand breaks (DSB) in DNA during mitosis and meiosis. Has DNA dependent ATPase activity. Promotes D-loop (displacement loop) formation with RAD51 recombinase. Modifies the topology of double-stranded DNA during the D-loop reaction to facilitate the invasion of the homologous duplex molecule by the initiating single-stranded DNA substrate. Required for adaptation from G2/M checkpoint arrest induced by a double strand break, by participating in monitoring the extent of single-stranded DNA produced by resection of DNA ends. This role is distinct from its roles in recombination. Promotes colocalization of RAD51 and DMC1 during meiotic recombination. Involved in crossover interference. The sequence is that of DNA repair and recombination protein RDH54 (RDH54) from Saccharomyces cerevisiae (strain ATCC 204508 / S288c) (Baker's yeast).